The following is a 93-amino-acid chain: Small ribosomal subunit protein uS19 (93 aa).

Belongs to the universal ribosomal protein uS19 family.

In terms of biological role, protein S19 forms a complex with S13 that binds strongly to the 16S ribosomal RNA. This chain is Small ribosomal subunit protein uS19, found in Micrococcus luteus (strain ATCC 4698 / DSM 20030 / JCM 1464 / CCM 169 / CCUG 5858 / IAM 1056 / NBRC 3333 / NCIMB 9278 / NCTC 2665 / VKM Ac-2230) (Micrococcus lysodeikticus).